The chain runs to 101 residues: Small ribosomal subunit protein uS14A (101 aa).

2 disordered regions span residues 1-21 and 49-73; these read MAKK…AHHA and QRLP…PRGT. Composition is skewed to basic and acidic residues over residues 8 to 21 and 61 to 70; these read AKNE…AHHA and RNRDAADGRP.

This sequence belongs to the universal ribosomal protein uS14 family. Part of the 30S ribosomal subunit. Contacts proteins S3 and S10.

Its function is as follows. Binds 16S rRNA, required for the assembly of 30S particles and may also be responsible for determining the conformation of the 16S rRNA at the A site. The chain is Small ribosomal subunit protein uS14A from Kineococcus radiotolerans (strain ATCC BAA-149 / DSM 14245 / SRS30216).